A 278-amino-acid chain; its full sequence is Putative phosphoenolpyruvate synthase regulatory protein (278 aa).

Residue 158 to 165 coordinates ADP; that stretch reads GVSRSGKT.

Belongs to the pyruvate, phosphate/water dikinase regulatory protein family. PSRP subfamily.

The catalysed reaction is [pyruvate, water dikinase] + ADP = [pyruvate, water dikinase]-phosphate + AMP + H(+). It carries out the reaction [pyruvate, water dikinase]-phosphate + phosphate + H(+) = [pyruvate, water dikinase] + diphosphate. Its function is as follows. Bifunctional serine/threonine kinase and phosphorylase involved in the regulation of the phosphoenolpyruvate synthase (PEPS) by catalyzing its phosphorylation/dephosphorylation. This Acinetobacter baylyi (strain ATCC 33305 / BD413 / ADP1) protein is Putative phosphoenolpyruvate synthase regulatory protein.